A 645-amino-acid polypeptide reads, in one-letter code: Threonine--tRNA ligase (645 aa).

Residues 3–64 (DMINITFPDG…EQDGTITIVT (62 aa)) enclose the TGS domain. Positions 247–544 (DHRKLGKELG…LLEEYKGAFP (298 aa)) are catalytic. Cys340, His391, and His521 together coordinate Zn(2+).

This sequence belongs to the class-II aminoacyl-tRNA synthetase family. As to quaternary structure, homodimer. It depends on Zn(2+) as a cofactor.

The protein resides in the cytoplasm. The catalysed reaction is tRNA(Thr) + L-threonine + ATP = L-threonyl-tRNA(Thr) + AMP + diphosphate + H(+). Functionally, catalyzes the attachment of threonine to tRNA(Thr) in a two-step reaction: L-threonine is first activated by ATP to form Thr-AMP and then transferred to the acceptor end of tRNA(Thr). Also edits incorrectly charged L-seryl-tRNA(Thr). The sequence is that of Threonine--tRNA ligase from Halalkalibacterium halodurans (strain ATCC BAA-125 / DSM 18197 / FERM 7344 / JCM 9153 / C-125) (Bacillus halodurans).